The sequence spans 131 residues: Small ribosomal subunit protein uS11 (131 aa).

Residues 1–15 are compositionally biased toward basic residues; it reads MAAKTVKKTRRRKER. A disordered region spans residues 1-23; the sequence is MAAKTVKKTRRRKERKNVEHGAA.

Belongs to the universal ribosomal protein uS11 family. In terms of assembly, part of the 30S ribosomal subunit. Interacts with proteins S7 and S18. Binds to IF-3.

Located on the platform of the 30S subunit, it bridges several disparate RNA helices of the 16S rRNA. Forms part of the Shine-Dalgarno cleft in the 70S ribosome. The protein is Small ribosomal subunit protein uS11 of Clostridium beijerinckii (strain ATCC 51743 / NCIMB 8052) (Clostridium acetobutylicum).